Consider the following 987-residue polypeptide: UPF0182 protein DIP0733 (987 aa).

7 helical membrane passes run 19 to 39 (LTWL…VVDL), 63 to 83 (IGLF…AGWF), 115 to 135 (FLVV…QQAW), 176 to 196 (SVLL…LGGI), 212 to 234 (YAKV…SYWL), 261 to 281 (AKIV…SVIV), and 290 to 310 (ISTV…PIMM). Residues 904 to 927 (DLGEAKGLKPESQNRDKPEDKEGK) are compositionally biased toward basic and acidic residues. Residues 904–950 (DLGEAKGLKPESQNRDKPEDKEGKAPSTPSAPASGSGTTGEAIGKIN) are disordered. A compositionally biased stretch (low complexity) spans 928–943 (APSTPSAPASGSGTTG).

The protein belongs to the UPF0182 family.

The protein resides in the cell membrane. The sequence is that of UPF0182 protein DIP0733 from Corynebacterium diphtheriae (strain ATCC 700971 / NCTC 13129 / Biotype gravis).